Reading from the N-terminus, the 385-residue chain is GTP cyclohydrolase-2 (385 aa).

The DHBP synthase-like stretch occupies residues 1-189; that stretch reads MYADAPSDSA…RDIADYRVHV (189 aa). The GTP cyclohydrolase II stretch occupies residues 190–385; sequence VRTLRRVAEA…TKAERSGHMF (196 aa). 240-244 is a binding site for GTP; that stretch reads RLHSE. Positions 245, 256, and 258 each coordinate Zn(2+). Residues glutamine 261, 283–285, and threonine 305 contribute to the GTP site; that span reads EGR. Aspartate 317 acts as the Proton acceptor in catalysis. The Nucleophile role is filled by arginine 319. Residues threonine 340 and lysine 345 each contribute to the GTP site.

The protein in the N-terminal section; belongs to the DHBP synthase family. This sequence in the C-terminal section; belongs to the GTP cyclohydrolase II family. The cofactor is Zn(2+).

It catalyses the reaction GTP + 4 H2O = 2,5-diamino-6-hydroxy-4-(5-phosphoribosylamino)-pyrimidine + formate + 2 phosphate + 3 H(+). It participates in cofactor biosynthesis; riboflavin biosynthesis; 5-amino-6-(D-ribitylamino)uracil from GTP: step 1/4. In terms of biological role, catalyzes the conversion of GTP to 2,5-diamino-6-ribosylamino-4(3H)-pyrimidinone 5'-phosphate (DARP), formate and pyrophosphate. The protein is GTP cyclohydrolase-2 (ribA) of Azospirillum brasilense.